We begin with the raw amino-acid sequence, 300 residues long: Small ribosomal subunit protein uS2 (300 aa).

Residues 228 to 300 (RAGLSADKDA…PAAEAPSTEA (73 aa)) are disordered. Residues 258–300 (AAPAAEAAPAAEAAPAAEAAPAAEAQAAPAAEAPAAEAPSTEA) are compositionally biased toward low complexity.

This sequence belongs to the universal ribosomal protein uS2 family.

This Rhodococcus jostii (strain RHA1) protein is Small ribosomal subunit protein uS2.